A 228-amino-acid polypeptide reads, in one-letter code: Carbonic anhydrase (228 aa).

4 residues coordinate Zn(2+): Cys56, Asp58, His112, and Cys115.

The protein belongs to the beta-class carbonic anhydrase family. Zn(2+) is required as a cofactor.

The enzyme catalyses hydrogencarbonate + H(+) = CO2 + H2O. Catalyzes the reversible hydration of CO(2) to H(2)CO(3). The main role may be to provide inorganic carbon for the bicarbonate-dependent carboxylation reactions catalyzed by pyruvate carboxylase, acetyl-CoA carboxylase and carbamoyl-phosphate synthetase. Involved in osmoadaptation. This chain is Carbonic anhydrase, found in Emericella nidulans (strain FGSC A4 / ATCC 38163 / CBS 112.46 / NRRL 194 / M139) (Aspergillus nidulans).